Here is a 358-residue protein sequence, read N- to C-terminus: U5 small nuclear ribonucleoprotein 40 kDa protein (358 aa).

Residue lysine 18 forms a Glycyl lysine isopeptide (Lys-Gly) (interchain with G-Cter in SUMO2) linkage. Residue arginine 21 is modified to Asymmetric dimethylarginine. WD repeat units follow at residues 65–104 (GHEG…DNYA), 108–147 (GHSG…RVKR), 150–190 (GHTS…AIQT), 192–231 (QNTY…LTYT), 234–273 (GHAD…PKER), 284–323 (NFEK…ILYK), and 326–358 (GHAG…GEIQ). Residue lysine 271 forms a Glycyl lysine isopeptide (Lys-Gly) (interchain with G-Cter in SUMO2) linkage.

Component of the pre-catalytic and catalytic spliceosome complexes. Component of the postcatalytic spliceosome P complex. Part of the U5 snRNP complex. Interacts with PRPF8. Component of the U4/U6-U5 tri-snRNP complex composed of the U4, U6 and U5 snRNAs and at least PRPF3, PRPF4, PRPF6, PRPF8, PRPF31, SNRNP200, TXNL4A, WDR57, SNRNP40, DDX23, CD2BP2, PPIH, SNU13, EFTUD2, SART1 and USP39. Component of the minor spliceosome, which splices U12-type introns.

It localises to the nucleus. In terms of biological role, required for pre-mRNA splicing as component of the activated spliceosome. Component of the U5 small nuclear ribonucleoprotein (snRNP) complex and the U4/U6-U5 tri-snRNP complex, building blocks of the spliceosome. As a component of the minor spliceosome, involved in the splicing of U12-type introns in pre-mRNAs. The chain is U5 small nuclear ribonucleoprotein 40 kDa protein (SNRNP40) from Bos taurus (Bovine).